A 420-amino-acid polypeptide reads, in one-letter code: uncharacterized protein (420 aa).

One can recognise a TRAM domain in the interval 7–65 (NIERGSVINVEILNAAHGGQGIAKYDGRVIFVKGAFPGDRLSANITHVKKKFARATIAS). The S-adenosyl-L-methionine site is built by Gln-245, Tyr-280, Glu-304, and Asp-349. Residue Cys-376 is the Nucleophile of the active site.

The protein belongs to the class I-like SAM-binding methyltransferase superfamily. RNA M5U methyltransferase family.

This is an uncharacterized protein from Corynebacterium diphtheriae (strain ATCC 700971 / NCTC 13129 / Biotype gravis).